The sequence spans 820 residues: DNA mismatch repair protein MutS (820 aa).

Glycine 618–serine 625 lines the ATP pocket.

The protein belongs to the DNA mismatch repair MutS family.

Functionally, this protein is involved in the repair of mismatches in DNA. It is possible that it carries out the mismatch recognition step. This protein has a weak ATPase activity. In Chlamydia trachomatis serovar L2b (strain UCH-1/proctitis), this protein is DNA mismatch repair protein MutS.